Here is a 282-residue protein sequence, read N- to C-terminus: Protoheme IX farnesyltransferase (282 aa).

9 helical membrane passes run 13–33 (VAGMVALSCVFGYLLAAGAAG), 36–56 (MVTSAAGTFLLTCACSVFNQI), 74–96 (ASGRLPTTAARAVGMAALLPALI), 101–120 (AGGVRLVLLSAAVLALYNGV), 129–149 (AFSLLAGAVPGALPPVFGWLA), 156–176 (SPEIALLFIVYYLWQVPHFWL), 207–227 (LWYASYMVALLLLPVFPFIAE), 232–252 (IAVCLAGITGLAASGYLLASP), and 261–281 (VSMLFVMLLLVVDRLVTSGII).

It belongs to the UbiA prenyltransferase family. Protoheme IX farnesyltransferase subfamily.

It is found in the cell inner membrane. The catalysed reaction is heme b + (2E,6E)-farnesyl diphosphate + H2O = Fe(II)-heme o + diphosphate. The protein operates within porphyrin-containing compound metabolism; heme O biosynthesis; heme O from protoheme: step 1/1. Converts heme B (protoheme IX) to heme O by substitution of the vinyl group on carbon 2 of heme B porphyrin ring with a hydroxyethyl farnesyl side group. The chain is Protoheme IX farnesyltransferase from Oleidesulfovibrio alaskensis (strain ATCC BAA-1058 / DSM 17464 / G20) (Desulfovibrio alaskensis).